A 348-amino-acid polypeptide reads, in one-letter code: D-alanine--D-alanine ligase (348 aa).

The 203-residue stretch at 132 to 334 (KRVLESIGIP…YPDLIEVLVT (203 aa)) folds into the ATP-grasp domain. An ATP-binding site is contributed by 162 to 217 (LARLTFPIFVKPANMGSSVGISKAQTKVELRKAIQLALTYDSRVLIEQGVVAREIE). Mg(2+) contacts are provided by Asp-288, Glu-301, and Asn-303.

Belongs to the D-alanine--D-alanine ligase family. It depends on Mg(2+) as a cofactor. Mn(2+) is required as a cofactor.

It is found in the cytoplasm. The enzyme catalyses 2 D-alanine + ATP = D-alanyl-D-alanine + ADP + phosphate + H(+). The protein operates within cell wall biogenesis; peptidoglycan biosynthesis. Its function is as follows. Cell wall formation. The polypeptide is D-alanine--D-alanine ligase (Streptococcus pyogenes serotype M2 (strain MGAS10270)).